Consider the following 431-residue polypeptide: 3-phosphoshikimate 1-carboxyvinyltransferase (431 aa).

3 residues coordinate 3-phosphoshikimate: Lys26, Ser27, and Arg31. Lys26 provides a ligand contact to phosphoenolpyruvate. Gly99 and Arg127 together coordinate phosphoenolpyruvate. 3-phosphoshikimate-binding residues include Ser170, Ser171, Gln172, Ser199, Glu314, and His343. Phosphoenolpyruvate is bound at residue Gln172. Glu314 acts as the Proton acceptor in catalysis. Phosphoenolpyruvate-binding residues include Arg347, Arg388, and Lys413.

The protein belongs to the EPSP synthase family. In terms of assembly, monomer.

Its subcellular location is the cytoplasm. It catalyses the reaction 3-phosphoshikimate + phosphoenolpyruvate = 5-O-(1-carboxyvinyl)-3-phosphoshikimate + phosphate. It participates in metabolic intermediate biosynthesis; chorismate biosynthesis; chorismate from D-erythrose 4-phosphate and phosphoenolpyruvate: step 6/7. Catalyzes the transfer of the enolpyruvyl moiety of phosphoenolpyruvate (PEP) to the 5-hydroxyl of shikimate-3-phosphate (S3P) to produce enolpyruvyl shikimate-3-phosphate and inorganic phosphate. The sequence is that of 3-phosphoshikimate 1-carboxyvinyltransferase from Mycobacterium marinum (strain ATCC BAA-535 / M).